Here is a 417-residue protein sequence, read N- to C-terminus: D-amino acid dehydrogenase (417 aa).

Position 3-17 (3-17 (IVVLGGGVVGVTSAW)) interacts with FAD.

Belongs to the DadA oxidoreductase family. FAD is required as a cofactor.

It carries out the reaction a D-alpha-amino acid + A + H2O = a 2-oxocarboxylate + AH2 + NH4(+). Its pathway is amino-acid degradation; D-alanine degradation; NH(3) and pyruvate from D-alanine: step 1/1. In terms of biological role, oxidative deamination of D-amino acids. The sequence is that of D-amino acid dehydrogenase from Aeromonas hydrophila subsp. hydrophila (strain ATCC 7966 / DSM 30187 / BCRC 13018 / CCUG 14551 / JCM 1027 / KCTC 2358 / NCIMB 9240 / NCTC 8049).